Here is a 437-residue protein sequence, read N- to C-terminus: Glucose-1-phosphate adenylyltransferase (437 aa).

Alpha-D-glucose 1-phosphate is bound by residues Tyr-113, Gly-179, 194–195 (EK), and Ser-212.

Belongs to the bacterial/plant glucose-1-phosphate adenylyltransferase family. In terms of assembly, homotetramer.

The enzyme catalyses alpha-D-glucose 1-phosphate + ATP + H(+) = ADP-alpha-D-glucose + diphosphate. Its pathway is glycan biosynthesis; glycogen biosynthesis. Functionally, involved in the biosynthesis of ADP-glucose, a building block required for the elongation reactions to produce glycogen. Catalyzes the reaction between ATP and alpha-D-glucose 1-phosphate (G1P) to produce pyrophosphate and ADP-Glc. This Haemophilus influenzae (strain 86-028NP) protein is Glucose-1-phosphate adenylyltransferase.